Consider the following 419-residue polypeptide: S-adenosylmethionine synthase (419 aa).

An ATP-binding site is contributed by H15. Position 17 (D17) interacts with Mg(2+). Residue E43 participates in K(+) binding. 2 residues coordinate L-methionine: E56 and Q100. Residues 100–110 (QSPDIAQGVDE) form a flexible loop region. ATP is bound by residues 171 to 173 (DGK), 248 to 249 (KF), D257, 263 to 264 (RK), A280, and K284. D257 is an L-methionine binding site. K288 is an L-methionine binding site.

This sequence belongs to the AdoMet synthase family. Homotetramer; dimer of dimers. The cofactor is Mg(2+). Requires K(+) as cofactor.

It is found in the cytoplasm. The catalysed reaction is L-methionine + ATP + H2O = S-adenosyl-L-methionine + phosphate + diphosphate. The protein operates within amino-acid biosynthesis; S-adenosyl-L-methionine biosynthesis; S-adenosyl-L-methionine from L-methionine: step 1/1. In terms of biological role, catalyzes the formation of S-adenosylmethionine (AdoMet) from methionine and ATP. The overall synthetic reaction is composed of two sequential steps, AdoMet formation and the subsequent tripolyphosphate hydrolysis which occurs prior to release of AdoMet from the enzyme. In Synechococcus sp. (strain CC9311), this protein is S-adenosylmethionine synthase.